A 196-amino-acid polypeptide reads, in one-letter code: Molybdenum cofactor guanylyltransferase (196 aa).

Residues 10 to 12 (LAG), K23, N51, D69, and D99 contribute to the GTP site. A Mg(2+)-binding site is contributed by D99.

This sequence belongs to the MobA family. In terms of assembly, monomer. Mg(2+) serves as cofactor.

The protein resides in the cytoplasm. It carries out the reaction Mo-molybdopterin + GTP + H(+) = Mo-molybdopterin guanine dinucleotide + diphosphate. In terms of biological role, transfers a GMP moiety from GTP to Mo-molybdopterin (Mo-MPT) cofactor (Moco or molybdenum cofactor) to form Mo-molybdopterin guanine dinucleotide (Mo-MGD) cofactor. This is Molybdenum cofactor guanylyltransferase from Shewanella frigidimarina (strain NCIMB 400).